Reading from the N-terminus, the 147-residue chain is Hemoglobin subunit beta (147 aa).

Val-2 is subject to N-acetylvaline. The 145-residue stretch at His-3–His-147 folds into the Globin domain. Thr-13 carries the post-translational modification Phosphothreonine. Ser-45 carries the post-translational modification Phosphoserine. Lys-60 carries the N6-acetyllysine modification. A heme b-binding site is contributed by His-64. Lys-83 carries the N6-acetyllysine modification. Residue His-93 participates in heme b binding. Cys-94 bears the S-nitrosocysteine mark. Lys-145 bears the N6-acetyllysine mark.

Belongs to the globin family. In terms of assembly, heterotetramer of two alpha chains and two beta chains. In terms of tissue distribution, red blood cells.

In terms of biological role, involved in oxygen transport from the lung to the various peripheral tissues. The polypeptide is Hemoglobin subunit beta (HBB) (Carlito syrichta (Philippine tarsier)).